Reading from the N-terminus, the 157-residue chain is Transcriptional repressor NrdR (157 aa).

A zinc finger lies at 3–34 (CPFCGHAESQVKDSRPSEDGAAIRRRRMCPEC). One can recognise an ATP-cone domain in the interval 49–139 (LIIVKRSGRR…VYRDFKETSD (91 aa)).

It belongs to the NrdR family. The cofactor is Zn(2+).

Its function is as follows. Negatively regulates transcription of bacterial ribonucleotide reductase nrd genes and operons by binding to NrdR-boxes. In Caulobacter vibrioides (strain ATCC 19089 / CIP 103742 / CB 15) (Caulobacter crescentus), this protein is Transcriptional repressor NrdR.